Here is a 341-residue protein sequence, read N- to C-terminus: Large ribosomal subunit protein uL10 (341 aa).

Residues 301–341 (EAAPAAAPAAEEKAEEEKKEEEEEKKEDQELSGLDSIFGGF) are disordered.

It belongs to the universal ribosomal protein uL10 family. As to quaternary structure, part of the 50S ribosomal subunit. Forms part of the ribosomal stalk which helps the ribosome interact with GTP-bound translation factors. Forms a heptameric L10(L12)2(L12)2(L12)2 complex, where L10 forms an elongated spine to which the L12 dimers bind in a sequential fashion.

Forms part of the ribosomal stalk, playing a central role in the interaction of the ribosome with GTP-bound translation factors. This is Large ribosomal subunit protein uL10 from Aeropyrum pernix (strain ATCC 700893 / DSM 11879 / JCM 9820 / NBRC 100138 / K1).